A 473-amino-acid chain; its full sequence is Phosphatidylserine synthase 1 (473 aa).

A2 carries the N-acetylalanine modification. The Cytoplasmic segment spans residues 2 to 35; it reads ASCVGSRTLSKDDVNYKMHFRMINEQQVEDITID. A helical membrane pass occupies residues 36–56; the sequence is FFYRPHTITLLSFTIVSLMYF. Over 57–72 the chain is Lumenal; that stretch reads AFTRDDSVPEDNIWRG. A helical membrane pass occupies residues 73 to 93; it reads ILSVIFFFLIISVLAFPNGPF. The Cytoplasmic segment spans residues 94–102; it reads TRPHPALWR. A helical membrane pass occupies residues 103–123; the sequence is MVFGLSVLYFLFLVFLLFLNF. At 124 to 186 the chain is on the lumenal side; sequence EQVKSLMYWL…AMKALLIRSY (63 aa). Residues 187–207 traverse the membrane as a helical segment; the sequence is GLCWTISITWELTELFFMHLL. The Cytoplasmic segment spans residues 208 to 216; the sequence is PNFAECWWD. Residues 217–237 form a helical membrane-spanning segment; the sequence is QVILDILLCNGGGIWLGMVVC. Residues 238 to 286 lie on the Lumenal side of the membrane; the sequence is RFLEMRTYHWASFKDIHTTTGKIKRAVLQFTPASWTYVRWFDPKSSFQR. A helical membrane pass occupies residues 287-307; the sequence is VAGVYLFMIIWQLTELNTFFL. The Cytoplasmic portion of the chain corresponds to 308-319; sequence KHIFVFQASHPL. Residues 320 to 342 form a helical membrane-spanning segment; it reads SWGRILFIGGITAPTVRQYYAYL. At 343-355 the chain is on the lumenal side; it reads TDTQCKRVGTQCW. A helical membrane pass occupies residues 356–376; sequence VFGVIGFLEAIVCIKFGQDLF. At 377-383 the chain is on the cytoplasmic side; sequence SKTQILY. A helical membrane pass occupies residues 384-404; sequence VVLWLLCVAFTTFLCLYGMIW. Topologically, residues 405–473 are lumenal; that stretch reads YAEHYGHREK…SKVTNGVGKK (69 aa). 4 positions are modified to phosphoserine: S417, S425, S442, and S454. A disordered region spans residues 430-473; it reads WHHRKGTKGSEDSPPKHAGNNESHSSRRRNRHSKSKVTNGVGKK. The span at 455-464 shows a compositional bias: basic residues; that stretch reads SRRRNRHSKS.

Belongs to the phosphatidyl serine synthase family.

The protein localises to the endoplasmic reticulum membrane. It carries out the reaction a 1,2-diacyl-sn-glycero-3-phosphoethanolamine + L-serine = a 1,2-diacyl-sn-glycero-3-phospho-L-serine + ethanolamine. It catalyses the reaction a 1,2-diacyl-sn-glycero-3-phosphocholine + L-serine = a 1,2-diacyl-sn-glycero-3-phospho-L-serine + choline. The protein operates within phospholipid metabolism; phosphatidylserine biosynthesis. With respect to regulation, requires calcium ions. Inhibited by exogenous phosphatidylserine. Catalyzes a base-exchange reaction in which the polar head group of phosphatidylethanolamine (PE) or phosphatidylcholine (PC) is replaced by L-serine. Catalyzes mainly the conversion of phosphatidylcholine. Also converts, in vitro and to a lesser extent, phosphatidylethanolamine. This Homo sapiens (Human) protein is Phosphatidylserine synthase 1 (PTDSS1).